The following is a 393-amino-acid chain: Dual specificity mitogen-activated protein kinase kinase 1 (393 aa).

Residues 1–27 (MPKKKPTPIQLNPAPDGSAVNGTSSAE) form a disordered region. The Protein kinase domain occupies 68-361 (FEKISELGAG…LKQLMVHAFI (294 aa)). Residues 74–82 (LGAGNGGVV) and Lys-97 each bind ATP. The active-site Proton acceptor is Asp-190. Ser-218 and Ser-222 each carry phosphoserine; by RAF. The RAF1-binding stretch occupies residues 270–307 (ELELMFGCQVEGDAAETPPRPRTPGRPLSSYGMDSRPP). Thr-286 is modified (phosphothreonine). Residue Thr-292 is modified to Phosphothreonine; by MAPK1. The residue at position 298 (Ser-298) is a Phosphoserine; by PAK.

This sequence belongs to the protein kinase superfamily. STE Ser/Thr protein kinase family. MAP kinase kinase subfamily. As to quaternary structure, found in a complex with at least BRAF, HRAS, MAP2K1, MAPK3/ERK1 and RGS14. Forms a heterodimer with MAP2K2/MEK2. Forms heterodimers with KSR2 which further dimerize to form tetramers. Interacts with KSR1 or KSR2 and BRAF; the interaction with KSR1 or KSR2 mediates KSR1-BRAF or KSR2-BRAF dimerization. Interacts with ARBB2, LAMTOR3, MAPK1/ERK2 and RAF1. Interacts with MAPK1/ERK2. Interacts with MORG1. Interacts with PPARG. Interacts with SGK1. Interacts with BIRC6/bruce. Interacts with KAT7; the interaction promotes KAT7 phosphorylation. Interacts with RAF1 and NEK10; the interaction is required for ERK1/2-signaling pathway activation in response to UV irradiation. Interacts with TRAF3IP3. Interacts with MOS. Phosphorylation at Ser-218 and Ser-222 by MAP kinase kinase kinases (RAF or MEKK1) positively regulates the kinase activity. Also phosphorylated at Thr-292 by MAPK1/ERK2 and at Ser-298 by PAK. MAPK1/ERK2 phosphorylation of Thr-292 occurs in response to cellular adhesion and leads to inhibition of Ser-298 phosphorylation by PAK. Autophosphorylated at Ser-218 and Ser-222, autophosphosphorylation is promoted by NEK10 following UV irradiation.

The protein localises to the cytoplasm. The protein resides in the cytoskeleton. It is found in the microtubule organizing center. It localises to the centrosome. Its subcellular location is the spindle pole body. The protein localises to the nucleus. The protein resides in the membrane. It carries out the reaction L-seryl-[protein] + ATP = O-phospho-L-seryl-[protein] + ADP + H(+). It catalyses the reaction L-threonyl-[protein] + ATP = O-phospho-L-threonyl-[protein] + ADP + H(+). The enzyme catalyses L-tyrosyl-[protein] + ATP = O-phospho-L-tyrosyl-[protein] + ADP + H(+). Its activity is regulated as follows. Ras proteins such as HRAS mediate the activation of RAF proteins such as RAF1 or BRAF which in turn activate extracellular signal-regulated kinases (ERK) through MAPK (mitogen-activated protein kinases) and ERK kinases MAP2K1/MEK1 and MAP2K2/MEK2. Activation occurs through phosphorylation of Ser-218 and Ser-222. MAP2K1/MEK1 binds KSR1 or KSR2 releasing the inhibitory intramolecular interaction between KSR1 or KSR2 protein kinase and N-terminal domains. This allows KSR1 or KSR2 dimerization with BRAF leading to BRAF activation and phosphorylation of MAP2K1. MAP2K1/MEK1 is also the target of negative feed-back regulation by its substrate kinases, such as MAPK1/ERK2. These phosphorylate MAP2K1/MEK1 on Thr-292, thereby facilitating dephosphorylation of the activating residues Ser-218 and Ser-222. Inhibited by serine/threonine phosphatase 2A. Its function is as follows. Dual specificity protein kinase which acts as an essential component of the MAP kinase signal transduction pathway. Binding of extracellular ligands such as growth factors, cytokines and hormones to their cell-surface receptors activates RAS and this initiates RAF1 activation. RAF1 then further activates the dual-specificity protein kinases MAP2K1/MEK1 and MAP2K2/MEK2. Both MAP2K1/MEK1 and MAP2K2/MEK2 function specifically in the MAPK/ERK cascade, and catalyze the concomitant phosphorylation of a threonine and a tyrosine residue in a Thr-Glu-Tyr sequence located in the extracellular signal-regulated kinases MAPK3/ERK1 and MAPK1/ERK2, leading to their activation and further transduction of the signal within the MAPK/ERK cascade. Activates BRAF in a KSR1 or KSR2-dependent manner; by binding to KSR1 or KSR2 releases the inhibitory intramolecular interaction between KSR1 or KSR2 protein kinase and N-terminal domains which promotes KSR1 or KSR2-BRAF dimerization and BRAF activation. Depending on the cellular context, this pathway mediates diverse biological functions such as cell growth, adhesion, survival and differentiation, predominantly through the regulation of transcription, metabolism and cytoskeletal rearrangements. One target of the MAPK/ERK cascade is peroxisome proliferator-activated receptor gamma (PPARG), a nuclear receptor that promotes differentiation and apoptosis. MAP2K1/MEK1 has been shown to export PPARG from the nucleus. The MAPK/ERK cascade is also involved in the regulation of endosomal dynamics, including lysosome processing and endosome cycling through the perinuclear recycling compartment (PNRC), as well as in the fragmentation of the Golgi apparatus during mitosis. This Oryctolagus cuniculus (Rabbit) protein is Dual specificity mitogen-activated protein kinase kinase 1 (MAP2K1).